Reading from the N-terminus, the 274-residue chain is Large ribosomal subunit protein uL2 (274 aa).

Disordered regions lie at residues 21–59 and 224–274; these read KVGL…GGHK and AMNP…QLKG. The segment covering 32 to 42 has biased composition (low complexity); the sequence is SLTSGKKSSGG. Basic residues predominate over residues 45 to 59; that stretch reads NHGRITTRHRGGGHK. Positions 263-274 are enriched in basic and acidic residues; that stretch reads KSSDKYIKQLKG.

The protein belongs to the universal ribosomal protein uL2 family. As to quaternary structure, part of the 50S ribosomal subunit. Forms a bridge to the 30S subunit in the 70S ribosome.

Functionally, one of the primary rRNA binding proteins. Required for association of the 30S and 50S subunits to form the 70S ribosome, for tRNA binding and peptide bond formation. It has been suggested to have peptidyltransferase activity; this is somewhat controversial. Makes several contacts with the 16S rRNA in the 70S ribosome. This is Large ribosomal subunit protein uL2 from Wolbachia pipientis wMel.